We begin with the raw amino-acid sequence, 160 residues long: 2-C-methyl-D-erythritol 2,4-cyclodiphosphate synthase (160 aa).

The a divalent metal cation site is built by Asp-12 and His-14. Residues Asp-12–His-14 and His-38–Ser-39 each bind 4-CDP-2-C-methyl-D-erythritol 2-phosphate. His-46 is a binding site for a divalent metal cation. 4-CDP-2-C-methyl-D-erythritol 2-phosphate is bound by residues Asp-60–Gly-62, Phe-65–Asp-69, Thr-136–Glu-139, Phe-143, and Arg-146.

Belongs to the IspF family. As to quaternary structure, homotrimer. A divalent metal cation serves as cofactor.

It carries out the reaction 4-CDP-2-C-methyl-D-erythritol 2-phosphate = 2-C-methyl-D-erythritol 2,4-cyclic diphosphate + CMP. It participates in isoprenoid biosynthesis; isopentenyl diphosphate biosynthesis via DXP pathway; isopentenyl diphosphate from 1-deoxy-D-xylulose 5-phosphate: step 4/6. In terms of biological role, involved in the biosynthesis of isopentenyl diphosphate (IPP) and dimethylallyl diphosphate (DMAPP), two major building blocks of isoprenoid compounds. Catalyzes the conversion of 4-diphosphocytidyl-2-C-methyl-D-erythritol 2-phosphate (CDP-ME2P) to 2-C-methyl-D-erythritol 2,4-cyclodiphosphate (ME-CPP) with a corresponding release of cytidine 5-monophosphate (CMP). This is 2-C-methyl-D-erythritol 2,4-cyclodiphosphate synthase from Acinetobacter baumannii (strain AB307-0294).